Here is a 138-residue protein sequence, read N- to C-terminus: uncharacterized protein (138 aa).

This is an uncharacterized protein from Schizosaccharomyces pombe (strain 972 / ATCC 24843) (Fission yeast).